A 185-amino-acid chain; its full sequence is Hypoxanthine/guanine phosphoribosyltransferase (185 aa).

This sequence belongs to the purine/pyrimidine phosphoribosyltransferase family. Archaeal HPRT subfamily. In terms of assembly, homodimer.

The protein resides in the cytoplasm. The enzyme catalyses IMP + diphosphate = hypoxanthine + 5-phospho-alpha-D-ribose 1-diphosphate. The catalysed reaction is GMP + diphosphate = guanine + 5-phospho-alpha-D-ribose 1-diphosphate. The protein operates within purine metabolism; IMP biosynthesis via salvage pathway; IMP from hypoxanthine: step 1/1. In terms of biological role, catalyzes a salvage reaction resulting in the formation of IMP that is energically less costly than de novo synthesis. In Methanococcus maripaludis (strain C5 / ATCC BAA-1333), this protein is Hypoxanthine/guanine phosphoribosyltransferase.